Consider the following 412-residue polypeptide: Chorismate synthase (412 aa).

Residues arginine 40 and arginine 46 each coordinate NADP(+). FMN contacts are provided by residues 134–136, 255–256, glycine 299, 314–318, and arginine 340; these read RAS, QA, and KPIAT.

Belongs to the chorismate synthase family. Homotetramer. The cofactor is FMNH2.

It carries out the reaction 5-O-(1-carboxyvinyl)-3-phosphoshikimate = chorismate + phosphate. Its pathway is metabolic intermediate biosynthesis; chorismate biosynthesis; chorismate from D-erythrose 4-phosphate and phosphoenolpyruvate: step 7/7. Functionally, catalyzes the anti-1,4-elimination of the C-3 phosphate and the C-6 proR hydrogen from 5-enolpyruvylshikimate-3-phosphate (EPSP) to yield chorismate, which is the branch point compound that serves as the starting substrate for the three terminal pathways of aromatic amino acid biosynthesis. This reaction introduces a second double bond into the aromatic ring system. The chain is Chorismate synthase from Clavibacter michiganensis subsp. michiganensis (strain NCPPB 382).